Consider the following 339-residue polypeptide: Transcription factor IIIA (339 aa).

C2H2-type zinc fingers lie at residues Y13 to H37, F43 to H67, F73 to H98, Y105 to H129, Y135 to H159, Y162 to H188, V192 to H214, Y221 to H246, and F252 to H276. Basic and acidic residues-rich tracts occupy residues V275–P288 and K305–E316. Positions V275 to K339 are disordered.

As to expression, synthesized in oocytes and, in much lower levels, in somatic cells.

It localises to the nucleus. In terms of biological role, involved in ribosomal large subunit biogenesis. Interacts with the internal control region (ICR) of approximately 50 bases within the 5S RNA genes, is required for correct transcription of these genes by RNA polymerase III. Also binds the transcribed 5S RNA's. The chain is Transcription factor IIIA (gtf3a) from Xenopus borealis (Kenyan clawed frog).